The primary structure comprises 545 residues: DnaJ homolog subfamily C member 21 (545 aa).

The 67-residue stretch at 3 to 69 folds into the J domain; that stretch reads CHYEVLGVKR…QERAWYDNHR (67 aa). 4 disordered regions span residues 122 to 141, 276 to 302, 331 to 497, and 522 to 545; these read EKEH…SFGE, EYGQ…IANV, SFKS…KEVN, and HATA…RKNR. Acidic residues-rich tracts occupy residues 129–141 and 283–295; these read EEDE…SFGE and DASD…EELE. A coiled-coil region spans residues 180–286; the sequence is RWEKRAMEKE…YGQEFGDASD (107 aa). Residues 323-347 form a C2H2-type 1 zinc finger; sequence LYCPACDKSFKSDKAMKNHSKSKKH. Over residues 339–348 the composition is skewed to basic residues; that stretch reads KNHSKSKKHR. Over residues 372-388 the composition is skewed to acidic residues; the sequence is REEDDEEEDDDDDDEQN. A compositionally biased stretch (basic residues) spans 394–406; the sequence is KLSKRQKKKKRLQ. Residues 498–522 form a C2H2-type 2 zinc finger; that stretch reads LRCVTCQYEFTTRNKLFDHLKSTGH. A compositionally biased stretch (basic residues) spans 535–545; the sequence is SKKKKDSRKNR.

May act as a co-chaperone for HSP70. The polypeptide is DnaJ homolog subfamily C member 21 (dnajc21) (Danio rerio (Zebrafish)).